The following is a 603-amino-acid chain: Probable HECT-type ubiquitin ligase-interacting protein creD (603 aa).

Disordered regions lie at residues 375–398 and 432–499; these read ELDPNGYRTPGPGSGPGTPFGTLS and LNIT…MATP. Positions 443–455 are enriched in basic and acidic residues; the sequence is TDHESQNDSEHRR. The span at 465–481 shows a compositional bias: low complexity; it reads PSSGSNSHSPSSPVLSR. The segment covering 482–492 has biased composition (basic and acidic residues); the sequence is RPSDEVDHEHV.

It belongs to the arrestin family. As to quaternary structure, interacts with hulA.

In terms of biological role, component of the regulatory network controlling carbon source utilization through ubiquitination and deubiquitination involving creA, creB, creC, creD and acrB. May be involved in signaling by recognizing appropriately phosphorylated substrates via its arrestin domains and then recruit a HECT-type ubiquitin ligase such as hulA, leading to ubiquitination of the substrate, providing a link between ubiquitination and phosphorylation in protein regulation and stability. The sequence is that of Probable HECT-type ubiquitin ligase-interacting protein creD (creD) from Aspergillus flavus (strain ATCC 200026 / FGSC A1120 / IAM 13836 / NRRL 3357 / JCM 12722 / SRRC 167).